The primary structure comprises 347 residues: Phosphate acyltransferase (347 aa).

The protein belongs to the PlsX family. As to quaternary structure, homodimer. Probably interacts with PlsY.

It localises to the cytoplasm. The enzyme catalyses a fatty acyl-[ACP] + phosphate = an acyl phosphate + holo-[ACP]. The protein operates within lipid metabolism; phospholipid metabolism. Functionally, catalyzes the reversible formation of acyl-phosphate (acyl-PO(4)) from acyl-[acyl-carrier-protein] (acyl-ACP). This enzyme utilizes acyl-ACP as fatty acyl donor, but not acyl-CoA. This chain is Phosphate acyltransferase, found in Rhizobium meliloti (strain 1021) (Ensifer meliloti).